The primary structure comprises 190 residues: Putative manganese efflux pump MntP (190 aa).

6 helical membrane-spanning segments follow: residues 3–23 (FLQIFLLSIGVAADAFACSVV), 37–57 (LVLAGIFGVFQAAMPLIGWVI), 72–88 (HWIAFALLGVVGAKMIW), 111–131 (IILGLATSIDALAVGMGLAFV), 138–158 (VALSMGLITFALSLVGAWIGH), and 164–184 (FGKWATILGGIILIGIGANIV).

Belongs to the MntP (TC 9.B.29) family.

It localises to the cell membrane. Probably functions as a manganese efflux pump. The protein is Putative manganese efflux pump MntP of Corynebacterium glutamicum (strain R).